Reading from the N-terminus, the 1117-residue chain is Rhoptry apical surface protein 3 (1117 aa).

A compositionally biased stretch (polar residues) spans M1 to H12. Disordered regions lie at residues M1–G27, N47–T243, D258–I301, S325–T398, W415–A442, A490–L572, R600–S619, and Q654–G736. Basic and acidic residues-rich tracts occupy residues D83 to K100, T197 to S209, and M275 to G300. 2 stretches are compositionally biased toward low complexity: residues A418 to A442 and A490 to S508. The span at E510–R520 shows a compositional bias: basic and acidic residues. A compositionally biased stretch (polar residues) spans N530–S540. Basic and acidic residues predominate over residues F546–D555. Positions G557–E569 are enriched in polar residues. The span at D724 to L734 shows a compositional bias: basic and acidic residues. One can recognise a BSD domain in the interval M752–M788. The segment covering Q829 to T838 has biased composition (polar residues). 5 disordered regions span residues Q829–A848, I858–Q891, R909–P964, S1031–L1066, and G1095–A1117. Low complexity predominate over residues S839–A848. Residues R909–S931 are compositionally biased toward low complexity. The span at S1031–G1044 shows a compositional bias: polar residues. Composition is skewed to basic and acidic residues over residues M1046–G1062 and K1108–A1117.

In terms of assembly, interacts with RASP2.

It is found in the cytoplasmic vesicle. The protein resides in the secretory vesicle. It localises to the rhoptry membrane. The protein is Rhoptry apical surface protein 3 of Toxoplasma gondii (strain ATCC 50853 / GT1).